Here is a 507-residue protein sequence, read N- to C-terminus: MQDWTSECDLLVVGSGGGALTGAYTAAAQGLTTIVLEKTDRFGGTSAYSGASIWLPGTQVQERAGLPDSTENARSYLRALLGDAESERQDAYVETAPAVVALLEQNPNIEFEFRAFPDYYKAEGRMDTGRSINPLDLDPADIGDLAGRCVRNCTKTDRMDHAPGRMIGGRALIAVSAAVQSTARQNFAPESVLTSLIVEDGRVVGGLRSNPRYRQRIKANRGVLMHAGGGFEGNAEMREQAGTPGKAIWSMGPSGPTPATRSPPELAGRRRNSLARSGVVLPRGRAARRRRLHGRVRGGLVVDSPGSVPQRVASVRPVRTSHGCSPDDNGSAVPSFMIFDSREVTDCPPSASRTRPPPSTSKPEPGSVPTLSKNSLPRPDYRPERIAQHCRKVQRCRKLGVDEEFHRGEDPYDAFFCPPNGGANAALTAIENGPFYAARDRLSDLGTKGGLVTDVNGRVLRADGSAIDGLYAAGNTSASVAPFYPGPGVPLGTAMVFSYRAAQDMAK.

9–38 (DLLVVGSGGGALTGAYTAAAQGLTTIVLEK) provides a ligand contact to FAD. The interval 299–385 (GLVVDSPGSV…LPRPDYRPER (87 aa)) is disordered.

The protein belongs to the FAD-dependent oxidoreductase 2 family. 3-oxosteroid dehydrogenase subfamily. It depends on FAD as a cofactor.

Its subcellular location is the cell membrane. It carries out the reaction a 3-oxosteroid + A = a 3-oxo-Delta(1)-steroid + AH2. It participates in lipid metabolism; steroid degradation. Its function is as follows. Catalyzes the elimination of the C-1 and C-2 hydrogen atoms of the A-ring from the polycyclic ring structure of 3-ketosteroids. The chain is 3-oxosteroid 1-dehydrogenase from Rhodococcus opacus (Nocardia opaca).